A 294-amino-acid polypeptide reads, in one-letter code: Golgi phosphoprotein 3 homolog sauron (294 aa).

Residues 1 to 52 (MNRSDGLVRRSVKPRENGGAEGGLNANTPDDNQDALDNLKDQEDNIDDGDSK) form a disordered region. Residues 37–52 (DNLKDQEDNIDDGDSK) are compositionally biased toward basic and acidic residues. A 1,2-diacyl-sn-glycero-3-phospho-(1D-myo-inositol 4-phosphate) is bound by residues W77, R86, K167, and R170. Residues 186–197 (EKQNFLLFDMTT) form a beta-hairpin required for oligomerization region.

This sequence belongs to the GOLPH3/VPS74 family. As to quaternary structure, homooligomer. Interacts with botv, Ext2 and ttv. Interacts with Vti1. Interacts with Vps35, Rab5, Chc, Rab11, zip, Pav and Septin1.

The protein resides in the golgi apparatus membrane. It localises to the cytoplasmic vesicle. It is found in the cleavage furrow. Phosphatidylinositol-4-phosphate-binding protein that links Golgi membranes to the cytoskeleton and may participate in the tensile force required for vesicle budding from the Golgi. Thereby, may play a role in Golgi membrane trafficking and could indirectly give its flattened shape to the Golgi apparatus. May also bind to the coatomer to regulate Golgi membrane trafficking. May play a role in anterograde transport from the Golgi to the plasma membrane and regulate secretion. Also involved in the control of the localization of Golgi enzymes through interaction with their cytoplasmic part. Functions in cytokinesis by regulating contractile ring formation and vesicle trafficking during cleavage furrow ingression. May also have a role in the intital steps of central spindle formation. Can also bind phosphatidylinositol-3-phosphate and phosphatidylinositol-5-phosphate in vitro. The chain is Golgi phosphoprotein 3 homolog sauron from Drosophila melanogaster (Fruit fly).